The chain runs to 389 residues: Probable protein phosphatase 2C 47 (389 aa).

Residues 76–346 form the PPM-type phosphatase domain; sequence RSGSFADIGP…DNLTVIVVCF (271 aa). Mn(2+) is bound by residues D120, G121, D294, and D337.

This sequence belongs to the PP2C family. Mg(2+) is required as a cofactor. It depends on Mn(2+) as a cofactor.

The catalysed reaction is O-phospho-L-seryl-[protein] + H2O = L-seryl-[protein] + phosphate. It catalyses the reaction O-phospho-L-threonyl-[protein] + H2O = L-threonyl-[protein] + phosphate. The chain is Probable protein phosphatase 2C 47 from Oryza sativa subsp. japonica (Rice).